Reading from the N-terminus, the 47-residue chain is Type II secretion system protein N (47 aa).

The protein belongs to the GSP N family.

The protein localises to the cell inner membrane. Its function is as follows. Involved in a type II secretion system (T2SS, formerly general secretion pathway, GSP) for the export of proteins. This is Type II secretion system protein N (exeN) from Aeromonas salmonicida.